The sequence spans 1416 residues: K homology domain-containing protein 4 (1416 aa).

5 disordered regions span residues Asn-25–Arg-76, Lys-108–Ser-174, Val-196–Ser-225, Gln-255–Arg-320, and Ser-341–Pro-385. 3 stretches are compositionally biased toward low complexity: residues Val-196–His-213, Gln-273–Leu-285, and Ser-341–Ser-350. Over residues Gly-357–Pro-369 the composition is skewed to polar residues. KH domains lie at Phe-412–Asp-504, Gly-508–Met-594, Phe-747–Pro-816, Ala-817–Glu-892, and Asp-900–Pro-968. 2 disordered regions span residues Ala-1215–Arg-1240 and His-1289–Ala-1416. A compositionally biased stretch (polar residues) spans Val-1219–His-1239. Low complexity predominate over residues Gln-1343–Pro-1374. Positions Arg-1391–Asp-1402 are enriched in polar residues.

RNA-binding protein that recognizes the sequence AUACCC via its tandem KH domains 3 and 4, probably in order to promote mRNA instability. Plays an essential role in filamentous growth and virulence. The chain is K homology domain-containing protein 4 from Mycosarcoma maydis (Corn smut fungus).